The primary structure comprises 445 residues: Ribosomal protein uS12 methylthiotransferase RimO (445 aa).

An MTTase N-terminal domain is found at Ile4–Lys119. Residues Cys13, Cys48, Cys82, Cys156, Cys160, and Cys163 each contribute to the [4Fe-4S] cluster site. Residues Thr142–Asp372 form the Radical SAM core domain. The TRAM domain maps to Lys375–Asn441.

It belongs to the methylthiotransferase family. RimO subfamily. [4Fe-4S] cluster serves as cofactor.

Its subcellular location is the cytoplasm. The catalysed reaction is L-aspartate(89)-[ribosomal protein uS12]-hydrogen + (sulfur carrier)-SH + AH2 + 2 S-adenosyl-L-methionine = 3-methylsulfanyl-L-aspartate(89)-[ribosomal protein uS12]-hydrogen + (sulfur carrier)-H + 5'-deoxyadenosine + L-methionine + A + S-adenosyl-L-homocysteine + 2 H(+). Its function is as follows. Catalyzes the methylthiolation of an aspartic acid residue of ribosomal protein uS12. The polypeptide is Ribosomal protein uS12 methylthiotransferase RimO (Clostridium botulinum (strain Okra / Type B1)).